Here is a 411-residue protein sequence, read N- to C-terminus: Na(+)-translocating NADH-quinone reductase subunit B (411 aa).

3 helical membrane-spanning segments follow: residues 56–76 (IMIT…YNAG), 121–141 (FLPI…LFAV), and 161–181 (ILPA…GVVI). Position 228 is an FMN phosphoryl threonine (T228). 5 consecutive transmembrane segments (helical) span residues 254–274 (FIPG…AAVL), 284–304 (IMLG…AIGS), 309–329 (MFGM…GMVF), 345–365 (LLFG…NPAF), and 368–388 (GIML…HFFV).

The protein belongs to the NqrB/RnfD family. Composed of six subunits; NqrA, NqrB, NqrC, NqrD, NqrE and NqrF. It depends on FMN as a cofactor.

The protein resides in the cell inner membrane. The catalysed reaction is a ubiquinone + n Na(+)(in) + NADH + H(+) = a ubiquinol + n Na(+)(out) + NAD(+). Its function is as follows. NQR complex catalyzes the reduction of ubiquinone-1 to ubiquinol by two successive reactions, coupled with the transport of Na(+) ions from the cytoplasm to the periplasm. NqrA to NqrE are probably involved in the second step, the conversion of ubisemiquinone to ubiquinol. In Chromohalobacter salexigens (strain ATCC BAA-138 / DSM 3043 / CIP 106854 / NCIMB 13768 / 1H11), this protein is Na(+)-translocating NADH-quinone reductase subunit B.